Reading from the N-terminus, the 59-residue chain is Large ribosomal subunit protein bL32 (59 aa).

Residues 1–25 (MAVQQNKKSPSKRGMHRAHDFLTAP) are disordered.

The protein belongs to the bacterial ribosomal protein bL32 family.

The sequence is that of Large ribosomal subunit protein bL32 from Azoarcus sp. (strain BH72).